The following is a 204-amino-acid chain: Nucleoside triphosphate pyrophosphatase (204 aa).

The active-site Proton acceptor is the D79.

The protein belongs to the Maf family. It depends on a divalent metal cation as a cofactor.

The protein resides in the cytoplasm. It carries out the reaction a ribonucleoside 5'-triphosphate + H2O = a ribonucleoside 5'-phosphate + diphosphate + H(+). It catalyses the reaction a 2'-deoxyribonucleoside 5'-triphosphate + H2O = a 2'-deoxyribonucleoside 5'-phosphate + diphosphate + H(+). Its function is as follows. Nucleoside triphosphate pyrophosphatase. May have a dual role in cell division arrest and in preventing the incorporation of modified nucleotides into cellular nucleic acids. The protein is Nucleoside triphosphate pyrophosphatase of Trichodesmium erythraeum (strain IMS101).